We begin with the raw amino-acid sequence, 258 residues long: Type III pantothenate kinase (258 aa).

6 to 13 (DVGNTNTV) lines the ATP pocket. Residues Tyr100 and 107 to 110 (GADR) contribute to the substrate site. Asp109 functions as the Proton acceptor in the catalytic mechanism. K(+) is bound at residue Asp129. Position 132 (Thr132) interacts with ATP. Thr184 provides a ligand contact to substrate.

Belongs to the type III pantothenate kinase family. In terms of assembly, homodimer. NH4(+) serves as cofactor. K(+) is required as a cofactor.

It localises to the cytoplasm. The enzyme catalyses (R)-pantothenate + ATP = (R)-4'-phosphopantothenate + ADP + H(+). Its pathway is cofactor biosynthesis; coenzyme A biosynthesis; CoA from (R)-pantothenate: step 1/5. In terms of biological role, catalyzes the phosphorylation of pantothenate (Pan), the first step in CoA biosynthesis. The polypeptide is Type III pantothenate kinase (Geobacillus kaustophilus (strain HTA426)).